A 312-amino-acid polypeptide reads, in one-letter code: R2-like ligand binding oxidase (312 aa).

Residues glutamate 68, glutamate 101, and histidine 104 each coordinate Mn(2+). The segment at residues 71–162 (VTQDIQPFMA…QAQVRASVTY (92 aa)) is a cross-link (3-(O4'-tyrosyl)-valine (Val-Tyr)). Position 101 (glutamate 101) interacts with Fe cation. The Fe cation site is built by glutamate 167, glutamate 202, and histidine 205.

It belongs to the ribonucleoside diphosphate reductase small chain family. R2-like ligand binding oxidase subfamily. In terms of assembly, homodimer. It depends on Fe cation as a cofactor. Mn(2+) serves as cofactor.

In terms of biological role, probable oxidase that might be involved in lipid metabolism. In Mycolicibacterium gilvum (strain PYR-GCK) (Mycobacterium gilvum (strain PYR-GCK)), this protein is R2-like ligand binding oxidase.